The primary structure comprises 337 residues: 2-oxoglutarate-dependent dioxygenase frbA (337 aa).

Positions 175-290 (CSAELRLNHY…RHSLAYFGKP (116 aa)) constitute a Fe2OG dioxygenase domain. Fe cation is bound by residues H202, D204, and H262. Residue R281 coordinates 2-oxoglutarate.

This sequence belongs to the iron/ascorbate-dependent oxidoreductase family. It depends on Fe(2+) as a cofactor.

Its pathway is antifungal biosynthesis. In terms of biological role, 2-oxoglutarate-dependent dioxygenase; part of the gene cluster that mediates the biosynthesis of the antifungal antibiotic FR901469, an inhibitor of beta-1,3-glucansynthase, exerting antifungal activity against the pathogenes Candida albicans and Aspergillus fumigatus. FR901469 is a cyclic depsipeptide containing 12 amino acid residues and a fatty acid chain. The NRPS frbI contains 12 modules responsible for the formation of the depsipeptide backbone which is denoted as Acyl-Thr-Ala-Tyr-Val-4OHPro-Thr-Thr-3OHPro-threo3OHGln-Gly-Thr-Orn-OH (C71H116N14O23). The PKS frbB is probably involved in the production of the hydrocarbon chain, and the acyl-CoA ligase frbC might be involved in the transport of the chain to the peptide ptoduct of frbI. Because FR901469 contains 3 hydroxylated amino acid residues, the 3 oxygenases frbA, frbH, and frbJ might be participating in amino acid hydroxylation. As no thioesterase domains were detected in frbI or frbB, the thioesterases frbD and frbE may instead release and cyclize the products of the NRPS and PKS, respectively. The chain is 2-oxoglutarate-dependent dioxygenase frbA from Dothideomycetidae sp. (strain 11243) (Fungal sp. (strain No.11243)).